The primary structure comprises 135 residues: uncharacterized protein (135 aa).

The tract at residues 1–80 (MRSSSLPGAR…QRGSCASANA (80 aa)) is disordered. Over residues 54–65 (GARGGGRRGWGG) the composition is skewed to gly residues.

This is an uncharacterized protein from Homo sapiens (Human).